A 452-amino-acid chain; its full sequence is cAMP-dependent protein kinase regulatory subunit (452 aa).

The tract at residues 28 to 212 (QFCANYFNSK…ELSKTLGSNF (185 aa)) is dimerization and phosphorylation. The disordered stretch occupies residues 74 to 163 (IMTTNKRQPS…APPVPKSKIP (90 aa)). The span at 75–84 (MTTNKRQPSF) shows a compositional bias: polar residues. Over residues 95–106 (SIDHHHDDDPKE) the composition is skewed to basic and acidic residues. A Phosphoserine modification is found at Ser173. A nucleoside 3',5'-cyclic phosphate-binding positions include 213 to 330 (LFRQ…FLKD) and 333 to 451 (VLSS…QGSS). 4 residues coordinate 3',5'-cyclic AMP: Glu278, Arg287, Glu399, and Arg408.

This sequence belongs to the cAMP-dependent kinase regulatory chain family. As to quaternary structure, tetramer, composed of 2 regulatory (R) and 2 catalytic (C) subunits. In the presence of cAMP it dissociates into 2 active monomeric C subunits and an R dimer.

The protein is cAMP-dependent protein kinase regulatory subunit (PKAR) of Debaryomyces hansenii (strain ATCC 36239 / CBS 767 / BCRC 21394 / JCM 1990 / NBRC 0083 / IGC 2968) (Yeast).